Reading from the N-terminus, the 388-residue chain is Succinate--CoA ligase [ADP-forming] subunit beta (388 aa).

Residues 9–244 (KEIFRSMGVA…LEEEDPKEIE (236 aa)) enclose the ATP-grasp domain. ATP contacts are provided by residues Lys46, 53-55 (GRG), Glu99, Cys102, and Glu107. Residues Asn199 and Asp213 each coordinate Mg(2+). Substrate is bound by residues Asn264 and 321–323 (GIM).

This sequence belongs to the succinate/malate CoA ligase beta subunit family. As to quaternary structure, heterotetramer of two alpha and two beta subunits. Mg(2+) is required as a cofactor.

It catalyses the reaction succinate + ATP + CoA = succinyl-CoA + ADP + phosphate. The catalysed reaction is GTP + succinate + CoA = succinyl-CoA + GDP + phosphate. Its pathway is carbohydrate metabolism; tricarboxylic acid cycle; succinate from succinyl-CoA (ligase route): step 1/1. Its function is as follows. Succinyl-CoA synthetase functions in the citric acid cycle (TCA), coupling the hydrolysis of succinyl-CoA to the synthesis of either ATP or GTP and thus represents the only step of substrate-level phosphorylation in the TCA. The beta subunit provides nucleotide specificity of the enzyme and binds the substrate succinate, while the binding sites for coenzyme A and phosphate are found in the alpha subunit. The protein is Succinate--CoA ligase [ADP-forming] subunit beta of Staphylococcus aureus (strain MRSA252).